The following is a 242-amino-acid chain: Beta-carotene ketolase (242 aa).

The enzyme catalyses all-trans-beta-carotene + 2 AH2 + 2 O2 = echinenone + 2 A + 3 H2O. It catalyses the reaction echinenone + 2 AH2 + 2 O2 = canthaxanthin + 2 A + 3 H2O. It functions in the pathway carotenoid biosynthesis; astaxanthin biosynthesis. In terms of biological role, converts beta-carotene to canthaxanthin via echinenone. This chain is Beta-carotene ketolase (crtW), found in Paracoccus sp. (strain N81106 / MBIC 01143) (Agrobacterium aurantiacum).